The following is a 75-amino-acid chain: Small ribosomal subunit protein bS16 (75 aa).

It belongs to the bacterial ribosomal protein bS16 family.

This chain is Small ribosomal subunit protein bS16, found in Campylobacter jejuni subsp. jejuni serotype O:23/36 (strain 81-176).